A 193-amino-acid polypeptide reads, in one-letter code: Putative anthranilate synthase component II (193 aa).

One can recognise a Glutamine amidotransferase type-1 domain in the interval 2–193; sequence KLLIINNHDS…WLAIPPTTNP (192 aa). Residues C78, H168, and E170 contribute to the active site.

As to quaternary structure, tetramer of two components I and two components II.

The enzyme catalyses chorismate + L-glutamine = anthranilate + pyruvate + L-glutamate + H(+). The protein operates within amino-acid biosynthesis; L-tryptophan biosynthesis; L-tryptophan from chorismate: step 1/5. The sequence is that of Putative anthranilate synthase component II from Haemophilus influenzae (strain ATCC 51907 / DSM 11121 / KW20 / Rd).